The following is a 699-amino-acid chain: Elongation factor G (699 aa).

The tr-type G domain maps to 8–288 (EDYRNFGIMA…AVVDYLPSPI (281 aa)). GTP-binding positions include 17–24 (AHIDAGKT), 86–90 (DTPGH), and 140–143 (NKMD).

Belongs to the TRAFAC class translation factor GTPase superfamily. Classic translation factor GTPase family. EF-G/EF-2 subfamily.

It localises to the cytoplasm. Its function is as follows. Catalyzes the GTP-dependent ribosomal translocation step during translation elongation. During this step, the ribosome changes from the pre-translocational (PRE) to the post-translocational (POST) state as the newly formed A-site-bound peptidyl-tRNA and P-site-bound deacylated tRNA move to the P and E sites, respectively. Catalyzes the coordinated movement of the two tRNA molecules, the mRNA and conformational changes in the ribosome. This Rhizobium meliloti (strain 1021) (Ensifer meliloti) protein is Elongation factor G.